Consider the following 92-residue polypeptide: Probable Fe(2+)-trafficking protein (92 aa).

The protein belongs to the Fe(2+)-trafficking protein family.

Its function is as follows. Could be a mediator in iron transactions between iron acquisition and iron-requiring processes, such as synthesis and/or repair of Fe-S clusters in biosynthetic enzymes. In Shewanella woodyi (strain ATCC 51908 / MS32), this protein is Probable Fe(2+)-trafficking protein.